The chain runs to 233 residues: 7-cyano-7-deazaguanine synthase (233 aa).

7–17 (LSGGLDSAVTS) is an ATP binding site. Zn(2+)-binding residues include cysteine 195, cysteine 206, cysteine 209, and cysteine 212.

The protein belongs to the QueC family. It depends on Zn(2+) as a cofactor.

The catalysed reaction is 7-carboxy-7-deazaguanine + NH4(+) + ATP = 7-cyano-7-deazaguanine + ADP + phosphate + H2O + H(+). It functions in the pathway purine metabolism; 7-cyano-7-deazaguanine biosynthesis. Functionally, catalyzes the ATP-dependent conversion of 7-carboxy-7-deazaguanine (CDG) to 7-cyano-7-deazaguanine (preQ(0)). The polypeptide is 7-cyano-7-deazaguanine synthase (Methanococcus maripaludis (strain C7 / ATCC BAA-1331)).